The chain runs to 75 residues: Exodeoxyribonuclease 7 small subunit (75 aa).

It belongs to the XseB family. In terms of assembly, heterooligomer composed of large and small subunits.

The protein resides in the cytoplasm. It catalyses the reaction Exonucleolytic cleavage in either 5'- to 3'- or 3'- to 5'-direction to yield nucleoside 5'-phosphates.. In terms of biological role, bidirectionally degrades single-stranded DNA into large acid-insoluble oligonucleotides, which are then degraded further into small acid-soluble oligonucleotides. This chain is Exodeoxyribonuclease 7 small subunit, found in Listeria welshimeri serovar 6b (strain ATCC 35897 / DSM 20650 / CCUG 15529 / CIP 8149 / NCTC 11857 / SLCC 5334 / V8).